The sequence spans 395 residues: Elongation factor Tu (395 aa).

The tr-type G domain occupies 10–204 (KPHVNVGTIG…AVDEYIPEPV (195 aa)). A G1 region spans residues 19 to 26 (GHVDHGKT). Residue 19–26 (GHVDHGKT) participates in GTP binding. Thr-26 contributes to the Mg(2+) binding site. The segment at 60 to 64 (GITIA) is G2. Residues 81-84 (DCPG) are G3. GTP contacts are provided by residues 81–85 (DCPGH) and 136–139 (NKVD). The tract at residues 136–139 (NKVD) is G4. The tract at residues 174–176 (SAL) is G5.

Belongs to the TRAFAC class translation factor GTPase superfamily. Classic translation factor GTPase family. EF-Tu/EF-1A subfamily. Monomer.

The protein resides in the cytoplasm. It catalyses the reaction GTP + H2O = GDP + phosphate + H(+). Its function is as follows. GTP hydrolase that promotes the GTP-dependent binding of aminoacyl-tRNA to the A-site of ribosomes during protein biosynthesis. The protein is Elongation factor Tu of Exiguobacterium sp. (strain ATCC BAA-1283 / AT1b).